Consider the following 391-residue polypeptide: Rhizopuspepsin-3 (391 aa).

The N-terminal stretch at 1–21 (MKFTLISSCVTLALMTLSIEA) is a signal peptide. The propeptide at 22–68 (APSGKKVNIPLTKNKDYKPNAKNAIQKAIAKYHRHRSVSSSNSTSTD) is activation peptide. One can recognise a Peptidase A1 domain in the interval 84–388 (YYGEVTVGTP…NPEVPHVQIA (305 aa)). Asp102 is an active-site residue. A disulfide bond links Cys115 and Cys118. Residue Asp285 is part of the active site. Cysteines 319 and 352 form a disulfide.

This sequence belongs to the peptidase A1 family.

The enzyme catalyses Hydrolysis of proteins with broad specificity similar to that of pepsin A, preferring hydrophobic residues at P1 and P1'. Clots milk and activates trypsinogen. Does not cleave 4-Gln-|-His-5, but does cleave 10-His-|-Leu-11 and 12-Val-|-Glu-13 in B chain of insulin.. In Rhizopus niveus, this protein is Rhizopuspepsin-3.